A 625-amino-acid polypeptide reads, in one-letter code: tRNA uridine 5-carboxymethylaminomethyl modification enzyme MnmG (625 aa).

FAD contacts are provided by residues 11 to 16 (GAGHAG), Val123, and Ser178. 271 to 285 (GPRYCPSIETKIVTF) is an NAD(+) binding site. Gln368 contributes to the FAD binding site.

Belongs to the MnmG family. As to quaternary structure, homodimer. Heterotetramer of two MnmE and two MnmG subunits. FAD is required as a cofactor.

It is found in the cytoplasm. NAD-binding protein involved in the addition of a carboxymethylaminomethyl (cmnm) group at the wobble position (U34) of certain tRNAs, forming tRNA-cmnm(5)s(2)U34. The polypeptide is tRNA uridine 5-carboxymethylaminomethyl modification enzyme MnmG (Bacteroides fragilis (strain ATCC 25285 / DSM 2151 / CCUG 4856 / JCM 11019 / LMG 10263 / NCTC 9343 / Onslow / VPI 2553 / EN-2)).